The chain runs to 317 residues: L-lactate dehydrogenase 1 (317 aa).

NAD(+) contacts are provided by residues V17, D38, K43, Y69, and 83–84; that span reads GA. Q86 and R92 together coordinate substrate. Residues S105, 122–124, and S147 contribute to the NAD(+) site; that span reads ATN. 124–127 provides a ligand contact to substrate; the sequence is NPVD. Substrate is bound at residue 152 to 155; the sequence is DSAR. Residue H179 is the Proton acceptor of the active site. Position 223 is a phosphotyrosine (Y223). Residue T232 participates in substrate binding.

The protein belongs to the LDH/MDH superfamily. LDH family. As to quaternary structure, homotetramer.

The protein localises to the cytoplasm. The enzyme catalyses (S)-lactate + NAD(+) = pyruvate + NADH + H(+). It functions in the pathway fermentation; pyruvate fermentation to lactate; (S)-lactate from pyruvate: step 1/1. Functionally, catalyzes the conversion of lactate to pyruvate (Potential). Appears to be the primary factor that allows S.aureus growth during nitrosative stress in both aerobically and anaerobically cultured cells. This chain is L-lactate dehydrogenase 1, found in Staphylococcus aureus (strain JH1).